The chain runs to 263 residues: UPF0246 protein Mmar10_0828 (263 aa).

Belongs to the UPF0246 family.

The protein is UPF0246 protein Mmar10_0828 of Maricaulis maris (strain MCS10) (Caulobacter maris).